A 63-amino-acid chain; its full sequence is Parvalbumin alpha (63 aa).

EF-hand domains are found at residues 28–38 and 39–63; these read IEEEELGLILK and VLLA…LVSE. Ca(2+)-binding residues include Glu-29, Glu-32, Asp-45, Asp-47, Asp-49, Lys-51, and Glu-56.

As to expression, detected in muscle and cutaneous mucus. In the skin, detected in cells in the basal region of the glandular epithelium of the dermal mucus glands (at protein level).

Its subcellular location is the cytoplasm. The protein resides in the secreted. In terms of biological role, in muscle, parvalbumin is thought to be involved in relaxation after contraction. It binds two calcium ions. The sequence is that of Parvalbumin alpha from Rana temporaria (European common frog).